Reading from the N-terminus, the 201-residue chain is Adenylyl-sulfate kinase (201 aa).

Position 35–42 (G35–S42) interacts with ATP. S109 functions as the Phosphoserine intermediate in the catalytic mechanism.

This sequence belongs to the APS kinase family.

It carries out the reaction adenosine 5'-phosphosulfate + ATP = 3'-phosphoadenylyl sulfate + ADP + H(+). The protein operates within sulfur metabolism; hydrogen sulfide biosynthesis; sulfite from sulfate: step 2/3. Its function is as follows. Catalyzes the synthesis of activated sulfate. This Salmonella arizonae (strain ATCC BAA-731 / CDC346-86 / RSK2980) protein is Adenylyl-sulfate kinase.